Consider the following 96-residue polypeptide: Bacterial microcompartment shell protein EutM (96 aa).

Residues 3–87 form the BMC domain; it reads ALGMIETRGL…PHGDLEEVFP (85 aa).

This sequence belongs to the bacterial microcompartments protein family. Homohexamer with a central pore of up to 8.6 Angstroms diameter. The hexamers pack into a two-dimensional array. Interacts with EutQ; a probably cytoplasm-facing helix (Val-49 to Gln-64) interacts with N-terminus of EutQ.

It localises to the bacterial microcompartment. The protein operates within amine and polyamine degradation; ethanolamine degradation. Probably a major component of the bacterial microcompartment (BMC) shell dedicated to ethanolamine degradation. Each homohexamer has a central pore with an opening of up to 8.6 Angstroms. A positively-charged funnel leads to the pore from each side of the hexamer. The pore probably allows metabolite passage into and out of the BMC. Expression of eutK, eutL, eutM, eutN, eutS (eutSMNLK) in E.coli leads to formation of a single BMC. Expression alone leads to thick filaments that interfere with cell separation. Coexpression of eutQ with eutSMNLK permits E.coli to make cells with more than one mobile BMC, as is usual in vivo. May play a role in BMC shell biogenesis. Can replace homolog pduA in the pdu operon, cells grow better than wild-type on 1,2-propanediol and vitamin B12. Protein is incorporated into the pdu BMC microcompartment. Its function is as follows. The ethanolamine (EA) catabolic bacterial microcompartment (BMC) probably concentrates low levels of ethanolamine catabolic enzymes, concentrates volatile reaction intermediates, keeps the level of toxic acetaldehyde low, generates enough acetyl-CoA to support cell growth, and maintains a pool of free coenzyme A (CoA) and NAD. Deletion of BMC genes (eutK, eutL, eutM) restores growth of eutD deletions, suggesting there are dedicated pools of coenzyme A (CoA) and NAD in the BMC. In terms of biological role, expression of the eut operon allows this bacteria to use ethanolamine as a carbon, nitrogen and energy source. It relies on cobalamin (vitamin B12) both as a cofactor for the ethanolamine ammonia-lyase (EAL) activity and to induce the operon. EA enhances bacterial survival in macrophages in a concentration-dependent manner, suggesting it is an important nutrient during infection. In Salmonella typhimurium (strain LT2 / SGSC1412 / ATCC 700720), this protein is Bacterial microcompartment shell protein EutM.